The sequence spans 573 residues: F-box/WD repeat-containing protein 5 (573 aa).

An F-box domain is found at 3–49 (EGGLPLLPDSLVYQIFLSLGPADVLAAGLVCRQWQAVSRDEFLWKEQ). One copy of the WD 1 repeat lies at 90 to 129 (EHTDQVLHLSFSHSGYQFASCSKDCTVKIWNNDLTISLLH). Serine 151 bears the Phosphoserine; by PLK4 mark. The short motif at 308-316 (RRVFDSVLD) is the D-box element. 2 WD repeats span residues 470–509 (TPND…CLAK) and 511–551 (RHED…RVLQ).

This sequence belongs to the FBXW5 family. In terms of assembly, part of the SCF (SKP1-CUL1-F-box) E3 ubiquitin-protein ligase complex SCF(FBXW5) composed of CUL1, SKP1, RBX1 and FBXW5. Component of the DCX(FBXW5) E3 ubiquitin ligase complex, at least composed of (CUL4A or CUL4B), DDB1, FBXW5 and RBX1. Interacts with CDC20, TSC1, TSC2 and SASS6. Interacts with EPS8. Interacts with TNFAIP8L1; TNFAIP8L1 competes with TSC2 to bind FBXW5 increasing TSC2 stability by preventing its ubiquitination. In terms of processing, phosphorylated at Ser-151 by PLK4 during the G1/S transition, leading to inhibit its ability to ubiquitinate SASS6. Ubiquitinated and degraded by the APC/C complex during mitosis and G1 phase. Widely expressed in adult and embryonal tissues.

It is found in the cytoplasm. The protein operates within protein modification; protein ubiquitination. In terms of biological role, substrate recognition component of both SCF (SKP1-CUL1-F-box protein) and DCX (DDB1-CUL4-X-box) E3 ubiquitin-protein ligase complexes. Substrate-specific adapter of the DCX(FBXW5) E3 ubiquitin-protein ligase complex which mediates the polyubiquitination and subsequent degradation of TSC2. May also act as a negative regulator of MAP3K7/TAK1 signaling in the interleukin-1B (IL1B) signaling pathway. Substrate recognition component of the SCF(FBXW5) E3 ubiquitin-protein ligase complex which mediates the ubiquitination and subsequent proteasomal degradation of SASS6 during S phase, leading to prevent centriole reduplication. The SCF(FBXW5) complex also mediates ubiquitination and degradation of actin-regulator EPS8 during G2 phase, leading to the transient degradation of EPS8 and subsequent cell shape changes required to allow mitotic progression. The polypeptide is F-box/WD repeat-containing protein 5 (Fbxw5) (Mus musculus (Mouse)).